Consider the following 785-residue polypeptide: Conserved oligomeric Golgi complex subunit 4 (785 aa).

The interval 1 to 24 (MADLDSPPKLSGVQQPSEGVGGGR) is disordered. A2 is modified (N-acetylalanine). Residues 2–84 (ADLDSPPKLS…VTLHRMGPNL (83 aa)) form an interaction with SCFD1 region. S6 is subject to Phosphoserine. Residues 85–153 (QLIEGDAKQL…TALRSEDYEQ (69 aa)) are interaction with STX5. The interval 618-740 (PQVQPWINSF…SQMATILNLE (123 aa)) is d domain. The segment at 741–785 (RVTEILDYWGPNSGPLTWRLTPAEVRQVLALRIDFRSEDIKRLRL) is e domain; essential for proper cell surface glycosylation.

Belongs to the COG4 family. Monomer. Component of the conserved oligomeric Golgi (COG) complex which is composed of eight different subunits and is required for normal Golgi morphology and localization. Mediates interaction of SCFD1 with the COG complex. Interacts with STX5.

It localises to the cytoplasm. The protein localises to the cytosol. It is found in the golgi apparatus membrane. In terms of biological role, required for normal Golgi function. Plays a role in SNARE-pin assembly and Golgi-to-ER retrograde transport via its interaction with SCFD1. The protein is Conserved oligomeric Golgi complex subunit 4 (COG4) of Homo sapiens (Human).